The primary structure comprises 85 residues: UPF0473 protein CLK_1946 (85 aa).

Belongs to the UPF0473 family.

The chain is UPF0473 protein CLK_1946 from Clostridium botulinum (strain Loch Maree / Type A3).